The following is a 348-amino-acid chain: Phosphate acyltransferase (348 aa).

Belongs to the PlsX family. As to quaternary structure, homodimer. Probably interacts with PlsY.

It localises to the cytoplasm. It catalyses the reaction a fatty acyl-[ACP] + phosphate = an acyl phosphate + holo-[ACP]. It participates in lipid metabolism; phospholipid metabolism. In terms of biological role, catalyzes the reversible formation of acyl-phosphate (acyl-PO(4)) from acyl-[acyl-carrier-protein] (acyl-ACP). This enzyme utilizes acyl-ACP as fatty acyl donor, but not acyl-CoA. The polypeptide is Phosphate acyltransferase (Francisella tularensis subsp. novicida (strain U112)).